We begin with the raw amino-acid sequence, 182 residues long: ATP-dependent protease subunit HslV (182 aa).

The active site involves Thr10. Residues Ala166, Cys169, and Ser172 each contribute to the Na(+) site.

It belongs to the peptidase T1B family. HslV subfamily. A double ring-shaped homohexamer of HslV is capped on each side by a ring-shaped HslU homohexamer. The assembly of the HslU/HslV complex is dependent on binding of ATP.

The protein resides in the cytoplasm. The catalysed reaction is ATP-dependent cleavage of peptide bonds with broad specificity.. Its activity is regulated as follows. Allosterically activated by HslU binding. Functionally, protease subunit of a proteasome-like degradation complex believed to be a general protein degrading machinery. This is ATP-dependent protease subunit HslV from Rickettsia bellii (strain OSU 85-389).